Consider the following 506-residue polypeptide: Histidine ammonia-lyase (506 aa).

Positions 143 to 145 (ASG) form a cross-link, 5-imidazolinone (Ala-Gly). Serine 144 carries the post-translational modification 2,3-didehydroalanine (Ser).

Belongs to the PAL/histidase family. In terms of processing, contains an active site 4-methylidene-imidazol-5-one (MIO), which is formed autocatalytically by cyclization and dehydration of residues Ala-Ser-Gly.

It is found in the cytoplasm. It catalyses the reaction L-histidine = trans-urocanate + NH4(+). Its pathway is amino-acid degradation; L-histidine degradation into L-glutamate; N-formimidoyl-L-glutamate from L-histidine: step 1/3. The sequence is that of Histidine ammonia-lyase from Salmonella paratyphi B (strain ATCC BAA-1250 / SPB7).